We begin with the raw amino-acid sequence, 143 residues long: Protein STIG1 (143 aa).

An N-terminal signal peptide occupies residues 1-23 (MDFIILLIAILALSSTPITIISG). The sufficient for PI(4)P binding stretch occupies residues 76–87 (RTCCFNYFCVDL). Residues 80–83 (FNYF) form a sufficient for binding to the extracellular domain of PRK2 region. Residues 88-115 (FTNRFNCGSCGLVCIVGTRCCGGICVDI) form a sufficient for PI(3)P binding region.

It belongs to the STIG1 family. Interacts with PRK1 and PRK2 (via extracellular domain). As to expression, expressed in the stigma and the upper section of the style.

The protein localises to the secreted. The protein resides in the extracellular space. It localises to the apoplast. In terms of biological role, promotes pollen tube growth. A C-terminal peptide is cleaved from the propeptide in the stigmatic exudate and represent the major form of STIG1. Binds phosphoinositol lipids. The binding of external phosphatidylinositol 3-phosphate (PI(3)P) and PRK2 by STIG1 induces a rapid intracellular reactive oxygen species elevation. This is Protein STIG1 from Solanum lycopersicum (Tomato).